Here is a 348-residue protein sequence, read N- to C-terminus: Protein RecA (348 aa).

65–72 (GPESSGKT) provides a ligand contact to ATP.

This sequence belongs to the RecA family.

The protein resides in the cytoplasm. Its function is as follows. Can catalyze the hydrolysis of ATP in the presence of single-stranded DNA, the ATP-dependent uptake of single-stranded DNA by duplex DNA, and the ATP-dependent hybridization of homologous single-stranded DNAs. It interacts with LexA causing its activation and leading to its autocatalytic cleavage. In Enterococcus gallinarum, this protein is Protein RecA.